The sequence spans 368 residues: Isopentenyl-diphosphate delta-isomerase (368 aa).

A substrate-binding site is contributed by 7 to 8 (RK). Residues Thr-65, 66–68 (GMT), Ser-96, and Asn-125 contribute to the FMN site. Position 96-98 (96-98 (SQR)) interacts with substrate. Gln-160 provides a ligand contact to substrate. Residue Glu-161 coordinates Mg(2+). FMN is bound by residues Lys-193, Ser-218, Thr-223, 275-277 (GIR), and 296-297 (AL).

It belongs to the IPP isomerase type 2 family. As to quaternary structure, homooctamer. Dimer of tetramers. FMN serves as cofactor. It depends on NADPH as a cofactor. Mg(2+) is required as a cofactor.

Its subcellular location is the cytoplasm. It catalyses the reaction isopentenyl diphosphate = dimethylallyl diphosphate. Its function is as follows. Involved in the biosynthesis of isoprenoids. Catalyzes the 1,3-allylic rearrangement of the homoallylic substrate isopentenyl (IPP) to its allylic isomer, dimethylallyl diphosphate (DMAPP). This Saccharolobus islandicus (strain L.S.2.15 / Lassen #1) (Sulfolobus islandicus) protein is Isopentenyl-diphosphate delta-isomerase.